A 453-amino-acid chain; its full sequence is Probable phenylalanine--tRNA ligase, mitochondrial (453 aa).

A mitochondrion-targeting transit peptide spans 1–27 (MLLTLRVQGARHWLKSTRCLASSAAPA). Substrate is bound by residues 142–145 (TAHQ), Arg164, 171–173 (THY), 178–180 (QAD), Glu285, and Phe310. One can recognise an FDX-ACB domain in the interval 356–453 (SHYPQCTNDL…SVDSFNVQIR (98 aa)).

This sequence belongs to the class-II aminoacyl-tRNA synthetase family.

It localises to the mitochondrion matrix. It catalyses the reaction tRNA(Phe) + L-phenylalanine + ATP = L-phenylalanyl-tRNA(Phe) + AMP + diphosphate + H(+). Is responsible for the charging of tRNA(Phe) with phenylalanine in mitochondrial translation. The sequence is that of Probable phenylalanine--tRNA ligase, mitochondrial from Drosophila melanogaster (Fruit fly).